The chain runs to 349 residues: Galactose-1-phosphate uridylyltransferase (349 aa).

29–32 (RAKR) serves as a coordination point for UDP-alpha-D-glucose. C53 and C56 together coordinate Zn(2+). UDP-alpha-D-glucose is bound at residue 78–79 (ND). H116 contacts Zn(2+). UDP-alpha-D-glucose contacts are provided by residues N154 and 160–162 (GCS). H165 contacts Zn(2+). The Tele-UMP-histidine intermediate role is filled by H167. Q169 contacts UDP-alpha-D-glucose. E183, H282, H297, and H299 together coordinate Fe cation. Residues 312–313 (KF), 317–318 (YE), and Q324 each bind UDP-alpha-D-glucose.

Belongs to the galactose-1-phosphate uridylyltransferase type 1 family. Zn(2+) serves as cofactor.

The catalysed reaction is alpha-D-galactose 1-phosphate + UDP-alpha-D-glucose = alpha-D-glucose 1-phosphate + UDP-alpha-D-galactose. The protein operates within carbohydrate metabolism; galactose metabolism. This Haemophilus influenzae (strain ATCC 51907 / DSM 11121 / KW20 / Rd) protein is Galactose-1-phosphate uridylyltransferase (galT).